The following is a 378-amino-acid chain: Chorismate synthase (378 aa).

Residue R49 participates in NADP(+) binding. FMN-binding positions include 126 to 128 (RAS), G287, 302 to 306 (KPTAT), and R328.

Belongs to the chorismate synthase family. Homotetramer. FMNH2 serves as cofactor.

It carries out the reaction 5-O-(1-carboxyvinyl)-3-phosphoshikimate = chorismate + phosphate. It functions in the pathway metabolic intermediate biosynthesis; chorismate biosynthesis; chorismate from D-erythrose 4-phosphate and phosphoenolpyruvate: step 7/7. Its function is as follows. Catalyzes the anti-1,4-elimination of the C-3 phosphate and the C-6 proR hydrogen from 5-enolpyruvylshikimate-3-phosphate (EPSP) to yield chorismate, which is the branch point compound that serves as the starting substrate for the three terminal pathways of aromatic amino acid biosynthesis. This reaction introduces a second double bond into the aromatic ring system. The polypeptide is Chorismate synthase (Synechococcus sp. (strain JA-3-3Ab) (Cyanobacteria bacterium Yellowstone A-Prime)).